Reading from the N-terminus, the 401-residue chain is Formate dehydrogenase (401 aa).

Positions 123 and 147 each coordinate substrate. NAD(+) is bound by residues S148, 202 to 203, D222, 257 to 261, T283, D309, 333 to 336, and S381; these read RI, PLHPE, and HISG.

Belongs to the D-isomer specific 2-hydroxyacid dehydrogenase family. FDH subfamily. In terms of assembly, homodimer.

It is found in the cytoplasm. It catalyses the reaction formate + NAD(+) = CO2 + NADH. In terms of biological role, catalyzes the NAD(+)-dependent oxidation of formate to carbon dioxide. Formate oxidation is the final step in the methanol oxidation pathway in methylotrophic microorganisms. Has a role in the detoxification of exogenous formate in non-methylotrophic organisms. The chain is Formate dehydrogenase from Pseudomonas sp. (strain 101) (Achromobacter parvulus T1).